The chain runs to 444 residues: Exodeoxyribonuclease 7 large subunit (444 aa).

The protein belongs to the XseA family. As to quaternary structure, heterooligomer composed of large and small subunits.

It localises to the cytoplasm. The enzyme catalyses Exonucleolytic cleavage in either 5'- to 3'- or 3'- to 5'-direction to yield nucleoside 5'-phosphates.. Bidirectionally degrades single-stranded DNA into large acid-insoluble oligonucleotides, which are then degraded further into small acid-soluble oligonucleotides. This is Exodeoxyribonuclease 7 large subunit from Rickettsia akari (strain Hartford).